The primary structure comprises 147 residues: UPF0178 protein VIBHAR_03247 (147 aa).

This sequence belongs to the UPF0178 family.

The protein is UPF0178 protein VIBHAR_03247 of Vibrio campbellii (strain ATCC BAA-1116).